Reading from the N-terminus, the 228-residue chain is L-ribulose-5-phosphate 4-epimerase UlaF (228 aa).

Substrate contacts are provided by residues 26–27, 43–44, and 72–73; these read GN, SG, and SS. Asp74, His93, and His95 together coordinate Zn(2+). The active-site Proton donor/acceptor is the Asp118. Zn(2+) is bound at residue His167. Catalysis depends on Tyr225, which acts as the Proton donor/acceptor.

This sequence belongs to the aldolase class II family. AraD/FucA subfamily. It depends on Zn(2+) as a cofactor.

It carries out the reaction L-ribulose 5-phosphate = D-xylulose 5-phosphate. It functions in the pathway cofactor degradation; L-ascorbate degradation; D-xylulose 5-phosphate from L-ascorbate: step 4/4. Its function is as follows. Catalyzes the isomerization of L-ribulose 5-phosphate to D-xylulose 5-phosphate. Is involved in the anaerobic L-ascorbate utilization. This Shigella dysenteriae serotype 1 (strain Sd197) protein is L-ribulose-5-phosphate 4-epimerase UlaF.